The following is a 401-amino-acid chain: 3-sulfinopropanoyl-CoA desulfinase (401 aa).

FAD-binding positions include 121–124, S130, and 153–156; these read ICIS and YWIT. 243 to 244 is a binding site for substrate; it reads YN. Residues R272, Q339, S343, 366 to 370, and Q387 each bind FAD; that span reads GGTAQ.

It belongs to the acyl-CoA dehydrogenase family. As to quaternary structure, homotetramer. It depends on FAD as a cofactor.

It catalyses the reaction 3-sulfinopropanoyl-CoA + H2O = propanoyl-CoA + sulfite + H(+). Catalyzes the conversion 3-sulfinopropanoyl-CoA (3SP-CoA) to propanoyl-CoA by abstraction of sulfite. Does not show dehydrogenase activity. Involved in the degradation of 3,3'-dithiodipropionate (DTDP), a sulfur-containing precursor substrate for biosynthesis of polythioesters (PTEs). The sequence is that of 3-sulfinopropanoyl-CoA desulfinase from Advenella mimigardefordensis (strain DSM 17166 / LMG 22922 / DPN7).